Consider the following 385-residue polypeptide: Tuliposide A-converting enzyme 1, chloroplastic (385 aa).

Residues 1–77 (MSVASFFSSL…PSPSLSPTPT (77 aa)) constitute a chloroplast transit peptide. The Acyl-ester intermediate role is filled by S235. Catalysis depends on charge relay system residues D327 and H359.

It belongs to the AB hydrolase superfamily. Homodimer. Expressed in roots, stems, leaves, petals, stamens and pistils, but not in bulb scales.

It is found in the plastid. It localises to the chloroplast. The catalysed reaction is 6-tuliposide A = tulipalin A + D-glucose. With respect to regulation, inhibited by NaF, AgNO(3), HgCl(2), CuSO(4) and phenylmethylsulfonyl fluoride (PMSF). In terms of biological role, lactone-forming carboxylesterases, specifically catalyzing intramolecular transesterification, but not hydrolysis. Involved in the biosynthesis of tulipalins, defensive chemicals that show antimicrobial activities against a broad range of strains of bacteria and fungi. Substrates are 6-tuliposide A &gt; 6-tuliposide B. This chain is Tuliposide A-converting enzyme 1, chloroplastic (TCEA1), found in Tulipa gesneriana (Garden tulip).